We begin with the raw amino-acid sequence, 381 residues long: Cobalt-precorrin-5B C(1)-methyltransferase (381 aa).

This sequence belongs to the CbiD family.

It catalyses the reaction Co-precorrin-5B + S-adenosyl-L-methionine = Co-precorrin-6A + S-adenosyl-L-homocysteine. The protein operates within cofactor biosynthesis; adenosylcobalamin biosynthesis; cob(II)yrinate a,c-diamide from sirohydrochlorin (anaerobic route): step 6/10. Functionally, catalyzes the methylation of C-1 in cobalt-precorrin-5B to form cobalt-precorrin-6A. This is Cobalt-precorrin-5B C(1)-methyltransferase from Clostridium botulinum (strain Eklund 17B / Type B).